A 189-amino-acid polypeptide reads, in one-letter code: Segregation and condensation protein B (189 aa).

This sequence belongs to the ScpB family. As to quaternary structure, homodimer. Homodimerization may be required to stabilize the binding of ScpA to the Smc head domains. Component of a cohesin-like complex composed of ScpA, ScpB and the Smc homodimer, in which ScpA and ScpB bind to the head domain of Smc. The presence of the three proteins is required for the association of the complex with DNA.

Its subcellular location is the cytoplasm. Its function is as follows. Participates in chromosomal partition during cell division. May act via the formation of a condensin-like complex containing Smc and ScpA that pull DNA away from mid-cell into both cell halves. This chain is Segregation and condensation protein B, found in Streptococcus sanguinis (strain SK36).